We begin with the raw amino-acid sequence, 607 residues long: Glutamine--fructose-6-phosphate aminotransferase [isomerizing] (607 aa).

Catalysis depends on Cys2, which acts as the Nucleophile; for GATase activity. The region spanning 2–217 (CGIIGIIGND…DGDWAVLTRN (216 aa)) is the Glutamine amidotransferase type-2 domain. SIS domains are found at residues 283–422 (IGID…ARGA) and 455–597 (VCHD…VDQP). Lys602 serves as the catalytic For Fru-6P isomerization activity.

As to quaternary structure, homodimer.

The protein resides in the cytoplasm. The enzyme catalyses D-fructose 6-phosphate + L-glutamine = D-glucosamine 6-phosphate + L-glutamate. Catalyzes the first step in hexosamine metabolism, converting fructose-6P into glucosamine-6P using glutamine as a nitrogen source. This Brucella abortus biovar 1 (strain 9-941) protein is Glutamine--fructose-6-phosphate aminotransferase [isomerizing].